Reading from the N-terminus, the 118-residue chain is Probable small nuclear ribonucleoprotein Sm D2 (118 aa).

The Sm domain maps to 29–115 (LSILTNSVKN…VILVVKNPLA (87 aa)).

Belongs to the snRNP core protein family.

It localises to the nucleus. The protein resides in the cytoplasm. It is found in the cytosol. Its function is as follows. Plays a role in pre-mRNA splicing as a core component of the spliceosomal U1, U2, U4 and U5 small nuclear ribonucleoproteins (snRNPs), the building blocks of the spliceosome. In Caenorhabditis elegans, this protein is Probable small nuclear ribonucleoprotein Sm D2 (snr-4).